The sequence spans 278 residues: Methyltransferase GfsG (278 aa).

S-adenosyl-L-methionine is bound by residues Gln-105 and 128-129 (DA). Glu-146 (proton acceptor) is an active-site residue. His-150 lines the S-adenosyl-L-methionine pocket.

This sequence belongs to the methyltransferase superfamily.

Its pathway is antibiotic biosynthesis. Functionally, methylase required for synthesis of the 16-membered macrolide antibiotics FD-891 and FD-892. In vitro uses S-adenosyl-L-methionine to methylate a number of biosynthetic intermediates in the synthesis of FD-891. In Streptomyces halstedii, this protein is Methyltransferase GfsG.